We begin with the raw amino-acid sequence, 539 residues long: Phosphoenolpyruvate carboxykinase (ATP) (539 aa).

Positions 61, 195, and 201 each coordinate substrate. ATP-binding positions include Lys-201, His-220, and 238–246 (GLSGTGKTT). Mn(2+) contacts are provided by Lys-201 and His-220. Asp-259 provides a ligand contact to Mn(2+). ATP is bound by residues Glu-287, Arg-325, and Thr-450. Arg-325 contacts substrate.

The protein belongs to the phosphoenolpyruvate carboxykinase (ATP) family. It depends on Mn(2+) as a cofactor.

Its subcellular location is the cytoplasm. The catalysed reaction is oxaloacetate + ATP = phosphoenolpyruvate + ADP + CO2. It participates in carbohydrate biosynthesis; gluconeogenesis. Functionally, involved in the gluconeogenesis. Catalyzes the conversion of oxaloacetate (OAA) to phosphoenolpyruvate (PEP) through direct phosphoryl transfer between the nucleoside triphosphate and OAA. The polypeptide is Phosphoenolpyruvate carboxykinase (ATP) (Methylobacterium radiotolerans (strain ATCC 27329 / DSM 1819 / JCM 2831 / NBRC 15690 / NCIMB 10815 / 0-1)).